A 578-amino-acid polypeptide reads, in one-letter code: Rhoptry protein 4 (578 aa).

The N-terminal stretch at M1–G33 is a signal peptide. The segment at V56–S82 is disordered. Residues L259–Y546 form the Protein kinase domain. Residues L559 to T578 are disordered. Acidic residues predominate over residues G569 to T578.

In terms of processing, phosphorylated on multiple serine and threonine residues in parasitic extracts and infected cells but not in extracellular parasites.

The protein localises to the secreted. It is found in the parasitophorous vacuole membrane. Functionally, thought to play a role in parasitophorous vacuole membrane function during the infection of host organisms. The chain is Rhoptry protein 4 from Toxoplasma gondii.